Here is a 672-residue protein sequence, read N- to C-terminus: Hydroxyproline O-galactosyltransferase GALT5 (672 aa).

Topologically, residues 1 to 28 (MKKPKLSKVEKIDKIDLFSSLWKQRSVR) are cytoplasmic. A helical; Signal-anchor for type II membrane protein membrane pass occupies residues 29-49 (VIMAIGFLYLVIVSVEIPLVF). Over 50-672 (KSWSSSSVPL…QNKPECCNMR (623 aa)) the chain is Lumenal. One can recognise a Galectin domain in the interval 191–392 (KLMELPCGLT…DIDVHSVFVA (202 aa)). N-linked (GlcNAc...) asparagine glycans are attached at residues N306 and N620.

The protein belongs to the glycosyltransferase 31 family. The cofactor is Mn(2+). Expressed in juvenile leaves, stems, cauline leaves and siliques.

It is found in the golgi apparatus membrane. It participates in protein modification; protein glycosylation. Possesses hydroxyproline O-galactosyltransferase activity. Transfers galactose from UDP-galactose to hydroxyproline residues in the arabinogalactan proteins (AGPs). Is specific for AGPs containing non-contiguous peptidyl hydroxyproline residues. Utilizes UDP-galactose solely as sugar donor. The addition of galactose onto the peptidyl hydroxyproline residues in AGP core proteins represents the first committed step in arabinogalactan polysaccharide addition. AGP glycans play essential roles in both vegetative and reproductive plant growth. This chain is Hydroxyproline O-galactosyltransferase GALT5, found in Arabidopsis thaliana (Mouse-ear cress).